Here is a 310-residue protein sequence, read N- to C-terminus: Carbamate kinase 1 (310 aa).

It belongs to the carbamate kinase family.

The protein resides in the cytoplasm. The catalysed reaction is hydrogencarbonate + NH4(+) + ATP = carbamoyl phosphate + ADP + H2O + H(+). Its pathway is metabolic intermediate metabolism; carbamoyl phosphate degradation; CO(2) and NH(3) from carbamoyl phosphate: step 1/1. This is Carbamate kinase 1 (arcC1) from Staphylococcus aureus (strain bovine RF122 / ET3-1).